The primary structure comprises 810 residues: Phenylalanine--tRNA ligase beta subunit (810 aa).

The tRNA-binding domain occupies 40 to 153; it reads KLPDQKVIVG…EACEIGQPLA (114 aa). The B5 domain occupies 399-480; the sequence is AAQKIVSLRP…RLYGYNNLEP (82 aa). Mg(2+)-binding residues include Asp-458, Asp-464, Glu-467, and Glu-468. One can recognise an FDX-ACB domain in the interval 714 to 808; it reads SKFPVVERDL…ARSELGAVIR (95 aa).

Belongs to the phenylalanyl-tRNA synthetase beta subunit family. Type 1 subfamily. In terms of assembly, tetramer of two alpha and two beta subunits. The cofactor is Mg(2+).

The protein localises to the cytoplasm. It catalyses the reaction tRNA(Phe) + L-phenylalanine + ATP = L-phenylalanyl-tRNA(Phe) + AMP + diphosphate + H(+). In Chlorobaculum tepidum (strain ATCC 49652 / DSM 12025 / NBRC 103806 / TLS) (Chlorobium tepidum), this protein is Phenylalanine--tRNA ligase beta subunit.